We begin with the raw amino-acid sequence, 322 residues long: Malate dehydrogenase (322 aa).

NAD(+) is bound by residues 10 to 15 (GSGQIG) and Asp34. Substrate-binding residues include Arg83 and Arg89. NAD(+) contacts are provided by residues Asn96 and 119 to 121 (ITN). Substrate-binding residues include Asn121 and Arg152. His176 functions as the Proton acceptor in the catalytic mechanism.

This sequence belongs to the LDH/MDH superfamily. MDH type 3 family.

It carries out the reaction (S)-malate + NAD(+) = oxaloacetate + NADH + H(+). In terms of biological role, catalyzes the reversible oxidation of malate to oxaloacetate. This chain is Malate dehydrogenase, found in Bradyrhizobium sp. (strain BTAi1 / ATCC BAA-1182).